Consider the following 328-residue polypeptide: D-cysteine desulfhydrase (328 aa).

Lysine 51 is modified (N6-(pyridoxal phosphate)lysine).

Belongs to the ACC deaminase/D-cysteine desulfhydrase family. Homodimer. It depends on pyridoxal 5'-phosphate as a cofactor.

The enzyme catalyses D-cysteine + H2O = hydrogen sulfide + pyruvate + NH4(+) + H(+). Functionally, catalyzes the alpha,beta-elimination reaction of D-cysteine and of several D-cysteine derivatives. It could be a defense mechanism against D-cysteine. The polypeptide is D-cysteine desulfhydrase (Salmonella typhimurium (strain LT2 / SGSC1412 / ATCC 700720)).